We begin with the raw amino-acid sequence, 613 residues long: Ethylene response sensor 1 (613 aa).

3 helical membrane passes run 23-43 (ISDA…IYFV), 58-78 (FGAF…MFFM), and 95-115 (AVVS…LLSV). 2 residues coordinate Cu cation: C65 and H69. In terms of domain architecture, GAF spans 158-307 (DRHTILRTTL…NVADQVAVAL (150 aa)). The region spanning 350-589 (VMNHEMRTPM…SFIIRLGICN (240 aa)) is the Histidine kinase domain. H353 carries the post-translational modification Phosphohistidine; by autocatalysis.

This sequence belongs to the ethylene receptor family. As to quaternary structure, homodimer; disulfide-linked. Heteromer with ETR1. Cu cation is required as a cofactor. Post-translationally, autophosphorylated on both His and Ser residues in the presence of manganese. Loss of His autophosphorylation in the presence of both manganese and magnesium. As to expression, expressed in etiolated seedlings, leaves, stems, roots, flowers, embryos, anthers, carpels and ovules.

Its subcellular location is the endoplasmic reticulum membrane. The catalysed reaction is ATP + protein L-histidine = ADP + protein N-phospho-L-histidine.. Functionally, ethylene receptor related to bacterial two-component regulators. Acts as a redundant negative regulator of ethylene signaling. In Arabidopsis thaliana (Mouse-ear cress), this protein is Ethylene response sensor 1 (ERS1).